Consider the following 608-residue polypeptide: Zinc metalloproteinase-disintegrin-like agkihagin (608 aa).

Residues 1–20 form the signal peptide; that stretch reads MIQVLLVTICLAAFPYQGSS. The propeptide occupies 21–189; sequence IILESGNVND…KKASQSNLTP (169 aa). The 197-residue stretch at 199 to 395 folds into the Peptidase M12B domain; sequence KFVKLFLVAD…NMPQCILKKP (197 aa). 3 disulfides stabilise this stretch: cysteine 310–cysteine 390, cysteine 350–cysteine 374, and cysteine 352–cysteine 357. A Zn(2+)-binding site is contributed by histidine 335. Residue glutamate 336 is part of the active site. 2 residues coordinate Zn(2+): histidine 339 and histidine 345. One can recognise a Disintegrin domain in the interval 403-488; it reads PPVCGNYFVE…ADCTDRFQKN (86 aa). Residues valine 405, asparagine 408, phenylalanine 410, glutamate 412, glutamate 415, and aspartate 418 each contribute to the Ca(2+) site. 14 disulfide bridges follow: cysteine 406–cysteine 435, cysteine 417–cysteine 430, cysteine 419–cysteine 425, cysteine 429–cysteine 452, cysteine 443–cysteine 449, cysteine 448–cysteine 474, cysteine 461–cysteine 481, cysteine 468–cysteine 499, cysteine 492–cysteine 504, cysteine 511–cysteine 561, cysteine 526–cysteine 570, cysteine 539–cysteine 549, cysteine 556–cysteine 596, and cysteine 590–cysteine 601. The short motif at 467-469 is the D/ECD-tripeptide element; that stretch reads ECD. Residues aspartate 469, methionine 470, aspartate 472, aspartate 483, and arginine 484 each coordinate Ca(2+). N-linked (GlcNAc...) asparagine glycosylation occurs at asparagine 501.

This sequence belongs to the venom metalloproteinase (M12B) family. P-III subfamily. P-IIIc sub-subfamily. In terms of assembly, homodimer; disulfide-linked. Zn(2+) is required as a cofactor. Expressed by the venom gland.

It localises to the secreted. Inhibited by EDTA and EGTA. Not inhibited by PMSF, antipain, pepstatin, and iodoacetamide. Functionally, strongly inhibits the collagen-induced human platelet aggregation. Hydrolyzes the Aalpha-chain of fibrinogen (FGA), without cleavage of Bbeta- and gamma-chains. Induces apoptosis and strongly inhibits proliferation of endothelial cells as well as adhesion of the cells to extracellular matrix proteins. The protein is Zinc metalloproteinase-disintegrin-like agkihagin of Deinagkistrodon acutus (Hundred-pace snake).